We begin with the raw amino-acid sequence, 82 residues long: Small ribosomal subunit protein bS18 (82 aa).

A disordered region spans residues 1–20 (MVDINQIPTRRPFHRRRKTC).

The protein belongs to the bacterial ribosomal protein bS18 family. Part of the 30S ribosomal subunit. Forms a tight heterodimer with protein bS6.

In terms of biological role, binds as a heterodimer with protein bS6 to the central domain of the 16S rRNA, where it helps stabilize the platform of the 30S subunit. The chain is Small ribosomal subunit protein bS18 from Chelativorans sp. (strain BNC1).